Here is a 558-residue protein sequence, read N- to C-terminus: Glucose-6-phosphate isomerase (558 aa).

A2 carries the post-translational modification N-acetylalanine. An N6-acetyllysine modification is found at K12. An N6-(2-hydroxyisobutyryl)lysine modification is found at K34. S107 carries the post-translational modification Phosphoserine. T109 carries the phosphothreonine modification. K142 carries the N6-acetyllysine modification. 159-160 (GS) is a binding site for D-glucose 6-phosphate. S185 is modified (phosphoserine; by CK2). 210-215 (SKTFTT) is a binding site for D-glucose 6-phosphate. T250 carries the phosphothreonine modification. D-glucose 6-phosphate-binding residues include Q354, E358, and H389. E358 functions as the Proton donor in the catalytic mechanism. H389 is an active-site residue. The residue at position 454 (K454) is an N6-acetyllysine; alternate. Residue K454 is modified to N6-malonyllysine; alternate. K454 carries the post-translational modification N6-succinyllysine; alternate. Residue S455 is modified to Phosphoserine. K519 serves as a coordination point for D-glucose 6-phosphate. The active site involves K519.

It belongs to the GPI family. In terms of assembly, homodimer; in the catalytically active form. Monomer in the secreted form. In terms of processing, phosphorylation at Ser-185 by CK2 has been shown to decrease enzymatic activity and may contribute to secretion by a non-classical secretory pathway. Post-translationally, ISGylated.

The protein localises to the cytoplasm. Its subcellular location is the secreted. It carries out the reaction alpha-D-glucose 6-phosphate = beta-D-fructose 6-phosphate. It participates in carbohydrate degradation; glycolysis; D-glyceraldehyde 3-phosphate and glycerone phosphate from D-glucose: step 2/4. Its function is as follows. In the cytoplasm, catalyzes the conversion of glucose-6-phosphate to fructose-6-phosphate, the second step in glycolysis, and the reverse reaction during gluconeogenesis. Besides it's role as a glycolytic enzyme, also acts as a secreted cytokine: acts as an angiogenic factor (AMF) that stimulates endothelial cell motility. Acts as a neurotrophic factor, neuroleukin, for spinal and sensory neurons. It is secreted by lectin-stimulated T-cells and induces immunoglobulin secretion. The protein is Glucose-6-phosphate isomerase of Macaca fascicularis (Crab-eating macaque).